We begin with the raw amino-acid sequence, 336 residues long: DNA-directed RNA polymerase subunit alpha (336 aa).

The segment at M1 to L234 is alpha N-terminal domain (alpha-NTD). An alpha C-terminal domain (alpha-CTD) region spans residues V269 to E336.

It belongs to the RNA polymerase alpha chain family. In terms of assembly, homodimer. The RNAP catalytic core consists of 2 alpha, 1 beta, 1 beta' and 1 omega subunit. When a sigma factor is associated with the core the holoenzyme is formed, which can initiate transcription.

It catalyses the reaction RNA(n) + a ribonucleoside 5'-triphosphate = RNA(n+1) + diphosphate. In terms of biological role, DNA-dependent RNA polymerase catalyzes the transcription of DNA into RNA using the four ribonucleoside triphosphates as substrates. The sequence is that of DNA-directed RNA polymerase subunit alpha from Thermotoga petrophila (strain ATCC BAA-488 / DSM 13995 / JCM 10881 / RKU-1).